The primary structure comprises 752 residues: Complement C2 (752 aa).

The N-terminal stretch at 1 to 20 (MGPLMVLFCLLFLYPGLADS) is a signal peptide. 3 consecutive Sushi domains span residues 22–86 (PSCP…VCKP), 87–146 (VRCP…VCDN), and 149–206 (GHCP…ICRQ). 6 disulfide bridges follow: cysteine 24-cysteine 64, cysteine 51-cysteine 84, cysteine 89-cysteine 131, cysteine 117-cysteine 144, cysteine 151-cysteine 191, and cysteine 177-cysteine 204. The N-linked (GlcNAc...) asparagine glycan is linked to asparagine 29. A glycan (N-linked (GlcNAc...) asparagine) is linked at asparagine 112. In terms of domain architecture, VWFA spans 254–452 (NLYLLLDCSQ…KALHQVFEHM (199 aa)). Positions 260–264 (DCSQS) match the MIDAS-like motif motif. The Mg(2+) site is built by serine 262 and serine 264. Residues asparagine 290 and asparagine 333 are each glycosylated (N-linked (GlcNAc...) asparagine). Threonine 337 contributes to the Mg(2+) binding site. Cystine bridges form between cysteine 463–cysteine 581, cysteine 492–cysteine 508, and cysteine 584–cysteine 600. The Peptidase S1 domain maps to 464 to 744 (GVGNMSANAS…MQPWLRQHLG (281 aa)). Asparagine 467 and asparagine 471 each carry an N-linked (GlcNAc...) asparagine glycan. Catalysis depends on charge relay system residues histidine 507 and aspartate 561. Asparagine 621 is a glycosylation site (N-linked (GlcNAc...) asparagine). Intrachain disulfides connect cysteine 638–cysteine 665 and cysteine 675–cysteine 705. The Charge relay system role is filled by serine 679.

It belongs to the peptidase S1 family. Serine protease component of the C3 convertase, also named C4bC2b, composed of the serine protease complement C2b and complement C4b. Serine protease component of the C5 convertase, also named C4bC2bC3b, composed of the serine protease complement C2b, complement C3b, as well as complement C4b. Requires Mg(2+) as cofactor. Mn(2+) serves as cofactor. Post-translationally, cleaved and activated by different proteases depending on the complement pathway to generate complement C2a and serine protease complement C2b chains. Cleaved and activated by C1S following activation by the classical complement system. Cleaved and activated by MASP2 following activation by the lectin complement system. Cleaved and activated by GZMK following activation by the GZMK complement system.

The protein resides in the secreted. It is found in the cell surface. The enzyme catalyses Selective cleavage of Arg-|-Ser bond in complement component C3 alpha-chain to form C3a and C3b, and Arg-|-Xaa bond in complement component C5 alpha-chain to form C5a and C5b.. Precursor of the catalytic component of the C3 and C5 convertase complexes, which are part of the complement pathway, a cascade of proteins that leads to phagocytosis and breakdown of pathogens and signaling that strengthens the adaptive immune system. Component C2 is part of the classical, lectin and GZMK complement systems. Its function is as follows. Catalytic component of the complement C3 and C5 convertase complexes. Following complement activation, recruited to the surface of pathogens by complement C4b opsonin to form the C3 convertase, or C3b and C4b opsonins to form the C5 convertase. As part of the C3 convertase, cleaves and activate C3 into C3a anaphylatoxin and C3b opsonin, the next components of the complement pathways. As part of the C5 convertase, cleaves and activate C5 into C5a anaphylatoxin and C5b component of the membrane attack complex. The chain is Complement C2 from Pongo pygmaeus (Bornean orangutan).